The chain runs to 369 residues: Cobalt-precorrin-5B C(1)-methyltransferase (369 aa).

It belongs to the CbiD family.

It carries out the reaction Co-precorrin-5B + S-adenosyl-L-methionine = Co-precorrin-6A + S-adenosyl-L-homocysteine. It participates in cofactor biosynthesis; adenosylcobalamin biosynthesis; cob(II)yrinate a,c-diamide from sirohydrochlorin (anaerobic route): step 6/10. In terms of biological role, catalyzes the methylation of C-1 in cobalt-precorrin-5B to form cobalt-precorrin-6A. This Prosthecochloris aestuarii (strain DSM 271 / SK 413) protein is Cobalt-precorrin-5B C(1)-methyltransferase.